Reading from the N-terminus, the 88-residue chain is Large ribosomal subunit protein bL27 (88 aa).

The tract at residues 1–23 (MAHKKAGGSSRNGRDSAGRRLGV) is disordered.

It belongs to the bacterial ribosomal protein bL27 family.

The protein is Large ribosomal subunit protein bL27 of Methylorubrum extorquens (strain CM4 / NCIMB 13688) (Methylobacterium extorquens).